The chain runs to 417 residues: Probable histone-binding protein lin-53 (417 aa).

WD repeat units lie at residues 118–158 (NHEG…AVPR), 170–210 (GHTK…NVAG), 220–260 (GHES…PGHC), 263–303 (AHSA…MKLH), 307–347 (SHRD…EDQS), and 364–404 (GHTA…YNEV).

It belongs to the WD repeat RBAP46/RBAP48/MSI1 family. In terms of assembly, binds directly to helix 1 of the histone fold of histone H4, a region that is not accessible when H4 is in chromatin. Probable component of a NuRD-like complex, composed of at least lin-53 and hda-1. Interacts with lin-35. Interacts with hda-1; the interaction is direct. Component of the DRM complex, at least composed of lin-9, lin-35, lin-37, lin-52, lin-53, lin-54- dpl-1 and efl-1. Interacts with hcp-3.

The protein resides in the nucleus. Its subcellular location is the chromosome. The protein localises to the centromere. Its function is as follows. Core histone-binding subunit that may target chromatin assembly factors, chromatin remodeling factors and histone deacetylases to their histone substrates in a manner that is regulated by nucleosomal DNA. Required for hcp-3 and his-1 stabilization, localization of hcp-3 to centromeres and for proper chromosome segregation. Synthetic multivulva class B (synMuvB) protein. SynMuvB proteins are required to repress the induction of vulval development by Ras signaling and probably act by forming the multiprotein DRM complex that represses transcription. In Caenorhabditis elegans, this protein is Probable histone-binding protein lin-53.